Reading from the N-terminus, the 446-residue chain is Argininosuccinate lyase (446 aa).

This sequence belongs to the lyase 1 family. Argininosuccinate lyase subfamily.

The protein localises to the cytoplasm. The enzyme catalyses 2-(N(omega)-L-arginino)succinate = fumarate + L-arginine. The protein operates within amino-acid biosynthesis; L-arginine biosynthesis; L-arginine from L-ornithine and carbamoyl phosphate: step 3/3. The polypeptide is Argininosuccinate lyase (Parabacteroides distasonis (strain ATCC 8503 / DSM 20701 / CIP 104284 / JCM 5825 / NCTC 11152)).